A 390-amino-acid polypeptide reads, in one-letter code: MAQRYDDLPHYGGMDGVGLPSSMYGDPHAARSMKSVHHLNHGPPLHPHQYPHSAHTNAMPPSMGSSVNDALKRDKDSIYGHPLFPLLALIFEKCELATCTPREPGVAGGDVCSSESFNEDIAVFSKQIRAEKPLFSSNPELDNLMIQAIQVLRFHLLELEKVHELCDNFCHRYISCLEGKMPIDLVIDDRDGGSKSDSEDLTRSAPLTDQPSWSRDHDDAASIRSGGTPGPSSGGHTSHSGDNSSEQGDGLDNSIASPSTGDDDDPDKEKKRNKGRGIFPKVATNIMRAWLFQHLTHPYPSEEQKKQLAQDTGLTILQVNNWFINARRRIVQPMIDQSNRAVSQGTPYNPDGQPIGGFVMDGQQHMGIRAPGPMSGMGMNMGMEGQWHYM.

The region spanning 108–191 (GGDVCSSESF…PIDLVIDDRD (84 aa)) is the MEIS N-terminal domain. A compositionally biased stretch (basic and acidic residues) spans 188–202 (DDRDGGSKSDSEDLT). The segment at 188-279 (DDRDGGSKSD…KKRNKGRGIF (92 aa)) is disordered. Residues 272–334 (RNKGRGIFPK…NARRRIVQPM (63 aa)) constitute a DNA-binding region (homeobox; TALE-type). Residues 299–329 (YPSEEQKKQLAQDTGLTILQVNNWFINARRR) are interaction with DNA.

It belongs to the TALE/MEIS homeobox family. In terms of assembly, interacts with pbx1 isoform b. As to expression, in the embryo, displays a broad expression pattern with high levels observed in tissues of neural cell fate such as midbrain, hindbrain, dorsal portion of the neural tube, and neural crest-derived branchial arches. Widely expressed in the adult with highest levels in brain and spleen.

The protein resides in the cytoplasm. The protein localises to the nucleus. In terms of biological role, induces expression of a number of neural crest marker genes as part of a heterodimer with isoform b of pbx1, to specify neural crest cell fate. Binds to a highly conserved region in the promoter of the neural crest marker gene zic3. This Xenopus laevis (African clawed frog) protein is Homeobox protein Meis1 (meis1).